Consider the following 156-residue polypeptide: Cyanate hydratase (156 aa).

Catalysis depends on residues arginine 96, glutamate 99, and serine 122.

The protein belongs to the cyanase family.

It catalyses the reaction cyanate + hydrogencarbonate + 3 H(+) = NH4(+) + 2 CO2. Its function is as follows. Catalyzes the reaction of cyanate with bicarbonate to produce ammonia and carbon dioxide. This is Cyanate hydratase from Escherichia coli O7:K1 (strain IAI39 / ExPEC).